Reading from the N-terminus, the 300-residue chain is Regulatory protein NocR (300 aa).

An HTH lysR-type domain is found at 1 to 59 (MIQSRQLEAFRAVMLTGGMTSAANLVRITQPAISRLIRDLEEEIGISLFERTGNRLRPT). Residues 19-38 (MTSAANLVRITQPAISRLIR) constitute a DNA-binding region (H-T-H motif).

This sequence belongs to the LysR transcriptional regulatory family.

In terms of biological role, positive regulatory protein for the noc operon involved in nopaline catabolism and uptake. This is Regulatory protein NocR (nocR) from Agrobacterium fabrum (strain C58 / ATCC 33970) (Agrobacterium tumefaciens (strain C58)).